The following is a 224-amino-acid chain: UPF0173 metal-dependent hydrolase Ta0764 (224 aa).

It belongs to the UPF0173 family.

This chain is UPF0173 metal-dependent hydrolase Ta0764, found in Thermoplasma acidophilum (strain ATCC 25905 / DSM 1728 / JCM 9062 / NBRC 15155 / AMRC-C165).